The sequence spans 100 residues: Apolipoprotein C-II (100 aa).

An N-terminal signal peptide occupies residues 1–22 (MDSRFLLALFLVLLVLGCEVQA). Positions 66-74 (SVDEKLRDM) are lipid binding. Positions 78-100 (SSAAMTTYAIIFTDQILTLLKGE) are lipoprotein lipase cofactor.

Belongs to the apolipoprotein C2 family. Post-translationally, proapolipoprotein C-II is synthesized as a sialic acid containing glycoprotein which is subsequently desialylated prior to its proteolytic processing. In terms of processing, proapolipoprotein C-II, the major form found in plasma undergoes proteolytic cleavage of its N-terminal hexapeptide to generate the mature form apolipoprotein C-II, which occurs as the minor form in plasma.

Its subcellular location is the secreted. Component of chylomicrons, very low-density lipoproteins (VLDL), low-density lipoproteins (LDL), and high-density lipoproteins (HDL) in plasma. Plays an important role in lipoprotein metabolism as an activator of lipoprotein lipase. This Myodes glareolus (Bank vole) protein is Apolipoprotein C-II (APOC2).